The following is an 83-amino-acid chain: uncharacterized protein (83 aa).

The interval 58–83 (EHGHDDEYDEFSDPNAWVPRRSRDTG) is disordered.

This is an uncharacterized protein from Mycobacterium tuberculosis (strain CDC 1551 / Oshkosh).